The sequence spans 38 residues: Photosystem II reaction center protein L (38 aa).

Residues 17–37 (SLFWGLLLIFILAVLFSSYFF) traverse the membrane as a helical segment.

It belongs to the PsbL family. In terms of assembly, PSII is composed of 1 copy each of membrane proteins PsbA, PsbB, PsbC, PsbD, PsbE, PsbF, PsbH, PsbI, PsbJ, PsbK, PsbL, PsbM, PsbT, PsbX, PsbY, PsbZ, Psb30/Ycf12, at least 3 peripheral proteins of the oxygen-evolving complex and a large number of cofactors. It forms dimeric complexes.

The protein localises to the plastid. Its subcellular location is the chloroplast thylakoid membrane. In terms of biological role, one of the components of the core complex of photosystem II (PSII). PSII is a light-driven water:plastoquinone oxidoreductase that uses light energy to abstract electrons from H(2)O, generating O(2) and a proton gradient subsequently used for ATP formation. It consists of a core antenna complex that captures photons, and an electron transfer chain that converts photonic excitation into a charge separation. This subunit is found at the monomer-monomer interface and is required for correct PSII assembly and/or dimerization. The chain is Photosystem II reaction center protein L from Guillardia theta (Cryptophyte).